The chain runs to 495 residues: Methyl viologen resistance protein SmvA (495 aa).

14 helical membrane passes run 5 to 25 (WLTLVIIVLVYIPVAIDATVL), 44 to 64 (LWIIDIYSLVMAGMVLPMGAL), 73 to 93 (LLMLGGTLFGLASLAAAFSHT), 96 to 116 (WLIATRVLLAIGAAMIVPATL), 135 to 155 (VWAAVGSGGAAFGPLIGGILL), 158 to 178 (FYWGSVFLINVPIVLVVMGLT), 192 to 212 (PLNLGHAVMLIIAILLLVYSA), 220 to 240 (LSLWVISFTLLTGALLLGLFI), 260 to 280 (IILSGVVMAMTAMITLVGFEL), 299 to 319 (VFMLPVMVASGFSGPIAGVLV), 327 to 347 (VATGGMALSALSFYGLAMTDF), 357 to 377 (LMALLGFSAASALLASTSAIM), 391 to 411 (IETMAYELGAGLGIAIFGLLL), and 469 to 489 (VALSSAGSMLLLLAVGMWFSL).

It belongs to the major facilitator superfamily. TCR/Tet family.

The protein resides in the cell inner membrane. Functionally, major efflux pump for acriflavine and other quaternary ammonium compounds (QACs). Also required for resistance to methyl viologen. The sequence is that of Methyl viologen resistance protein SmvA (smvA) from Salmonella typhimurium (strain LT2 / SGSC1412 / ATCC 700720).